We begin with the raw amino-acid sequence, 1260 residues long: Kinesin-like protein KIN-14E (1260 aa).

In terms of domain architecture, MyTH4 spans 115–274 (FQKDPIPTSL…PGREEIEALL (160 aa)). The FERM domain maps to 279-593 (LTTIVFFLDE…HINDVMLRRY (315 aa)). 2 coiled-coil regions span residues 615 to 676 (QNFE…LLEV) and 753 to 853 (SKRL…TAAI). Residues 888–1209 (KIRVYCRIRP…LLYASRVRTI (322 aa)) enclose the Kinesin motor domain. Position 972 to 977 (972 to 977 (GSGKTF)) interacts with ATP. Residues 1217-1239 (ISSKEMVRLKKLVAYWKEQAGKK) form a calmodulin-binding region. The homodimerization domain stretch occupies residues 1221 to 1260 (EMVRLKKLVAYWKEQAGKKGEEEDLVDIEEDRTRKDEADS). The disordered stretch occupies residues 1236–1260 (AGKKGEEEDLVDIEEDRTRKDEADS). A compositionally biased stretch (basic and acidic residues) spans 1251-1260 (DRTRKDEADS).

Belongs to the TRAFAC class myosin-kinesin ATPase superfamily. Kinesin family. KIN-14 subfamily. In terms of assembly, homodimer (via C-terminus). Binds microtubules via its N-terminus containing the MyTH4 domain and binds F-actin via its FERM domain. Interacts with KIPK1. Interacts with KIPK2. Interacts with AN. Interacts with AIR9. Interacts (via C-terminus) with KIC, CAM2, CAM4 and CAM6. KIC and calmodulin show competitive binding to KCBP. Binding to calmodulin inhibits microtubule binding activity. Binding to KIC inhibits microtubule binding activity and microtubule-stimulated ATPase activity. As to expression, widely expressed with the highest levels in flowers. Strongly expressed in the root tip. Highly detected in the branch apex of the trichome.

Its subcellular location is the cytoplasm. The protein resides in the cell cortex. The protein localises to the cytoskeleton. It is found in the spindle. It localises to the phragmoplast. Functionally, minus-end microtubule-dependent motor protein involved in the regulation of cell division and trichome morphogenesis through microtubules bundling. Possesses basal and microtubule-stimulated ATPase activities. Acts as a hub that brings together microtubules and actin filaments to modulate the cytoskeleton during trichome formation and morphogenesis. Could be involved in the negative regulation of root growth. This chain is Kinesin-like protein KIN-14E, found in Arabidopsis thaliana (Mouse-ear cress).